The chain runs to 60 residues: MAQVKVTLIHSVAHRQPTQRRTVKALGLGKINSSVILPDNAATRGQIFKIAHLVSVEEVK.

This sequence belongs to the universal ribosomal protein uL30 family. As to quaternary structure, part of the 50S ribosomal subunit.

This is Large ribosomal subunit protein uL30 from Limosilactobacillus reuteri (strain DSM 20016) (Lactobacillus reuteri).